We begin with the raw amino-acid sequence, 703 residues long: Polyribonucleotide nucleotidyltransferase (703 aa).

Residues Asp487 and Asp493 each contribute to the Mg(2+) site. The 60-residue stretch at 554 to 613 folds into the KH domain; it reads PKMETIKIDPDKIRDVIGKGGATIRSICEDTGASIDIDDNGTVRIYAESKLAADEAIYRI. One can recognise an S1 motif domain in the interval 623-691; that stretch reads GKLYRGKVER…ARGRIKLSMK (69 aa).

Belongs to the polyribonucleotide nucleotidyltransferase family. As to quaternary structure, component of the RNA degradosome, which is a multiprotein complex involved in RNA processing and mRNA degradation. The cofactor is Mg(2+).

It is found in the cytoplasm. It catalyses the reaction RNA(n+1) + phosphate = RNA(n) + a ribonucleoside 5'-diphosphate. Its function is as follows. Involved in mRNA degradation. Catalyzes the phosphorolysis of single-stranded polyribonucleotides processively in the 3'- to 5'-direction. In Hahella chejuensis (strain KCTC 2396), this protein is Polyribonucleotide nucleotidyltransferase.